The sequence spans 512 residues: MQLNPSEISELIKSKIQNLQGASEVRTQGTVVSVTDGICRVHGLQDVMQGEMLEFPGNTFGMALNLERDSVGAVVLGEYEHISEGDIVKTTGRILEVPVGPELLGRVVNSLGQPIDGKGPINAKLTDKIEKVAPGVIWRQSVSQPVQTGLKCVDSMVPVGRGQRELIIGDRQTGKTAVAVDAIINQKGKGLFCVYVAIGQKASTIANVVRKLEEHGAMEYTIVVAAPASESAALQYLAPYAGCTMGEYFRDTGEDALIIYDDLTKQAWGYRQVSLLLRRPPGREAYPGDVFYLHSRLLERAARVSAAWVEKLSNGAIKGKTGSLTALPVIETQAGDVSAFVPTNVISITDGQIFLETDLFNAGIRPAINAGISVSRVGGAAQTKLIKKLGGGVRLALAQYRELAAFAQFASDLDEATRKQLERGRLVTELMKQPQYSPMSISEMAVTLYAADKGYFDDVEVKRALECEKAMIGYLKTNCADLMKTMESTADLSADSEKQLAAGIAAFKSSWV.

Residue 169 to 176 (GDRQTGKT) participates in ATP binding.

The protein belongs to the ATPase alpha/beta chains family. As to quaternary structure, F-type ATPases have 2 components, CF(1) - the catalytic core - and CF(0) - the membrane proton channel. CF(1) has five subunits: alpha(3), beta(3), gamma(1), delta(1), epsilon(1). CF(0) has three main subunits: a(1), b(2) and c(9-12). The alpha and beta chains form an alternating ring which encloses part of the gamma chain. CF(1) is attached to CF(0) by a central stalk formed by the gamma and epsilon chains, while a peripheral stalk is formed by the delta and b chains.

It is found in the cell inner membrane. The enzyme catalyses ATP + H2O + 4 H(+)(in) = ADP + phosphate + 5 H(+)(out). In terms of biological role, produces ATP from ADP in the presence of a proton gradient across the membrane. The alpha chain is a regulatory subunit. This Dechloromonas aromatica (strain RCB) protein is ATP synthase subunit alpha.